We begin with the raw amino-acid sequence, 483 residues long: Iron-sulfur cluster assembly SufBD family protein ycf24 (483 aa).

It belongs to the iron-sulfur cluster assembly SufBD family.

It is found in the plastid. The protein localises to the chloroplast. This Guillardia theta (Cryptophyte) protein is Iron-sulfur cluster assembly SufBD family protein ycf24 (ycf24).